Consider the following 396-residue polypeptide: Protein NDRG1-A (396 aa).

A disordered region spans residues 326 to 396 (RSRTGSAASS…NSPKSMEVSC (71 aa)). Residues 327 to 340 (SRTGSAASSSSQDG) are compositionally biased toward low complexity. A run of 4 repeats spans residues 340–349 (GNRSRSHTNE), 350–359 (GSRSRSHTGD), 360–369 (GNRSRAHTGD), and 370–379 (GNRSRSHTDT). The 4 X 10 AA tandem repeats of G-[NS]-R-S-R-[AS]-H-T-[DGN]-[DET] stretch occupies residues 340-379 (GNRSRSHTNEGSRSRSHTGDGNRSRAHTGDGNRSRSHTDT). Residues 346–377 (HTNEGSRSRSHTGDGNRSRAHTGDGNRSRSHT) show a composition bias toward basic and acidic residues. Over residues 378–390 (DTNNINSDQNSPK) the composition is skewed to polar residues.

This sequence belongs to the NDRG family.

Functionally, may be involved in pronephros development, after specification of the pronephros. The chain is Protein NDRG1-A (ndrg1-a) from Xenopus laevis (African clawed frog).